The sequence spans 208 residues: Guanylate kinase (208 aa).

One can recognise a Guanylate kinase-like domain in the interval 21–201 (GRVVVLSGPS…ACAELVSLLV (181 aa)). Position 28 to 35 (28 to 35 (GPSAVGKS)) interacts with ATP.

Belongs to the guanylate kinase family.

Its subcellular location is the cytoplasm. It carries out the reaction GMP + ATP = GDP + ADP. Essential for recycling GMP and indirectly, cGMP. This chain is Guanylate kinase (gmk), found in Mycobacterium bovis (strain ATCC BAA-935 / AF2122/97).